A 287-amino-acid polypeptide reads, in one-letter code: Glutamate racemase (287 aa).

Polar residues predominate over residues 1 to 15 (MATKPQDANTTSREA). A disordered region spans residues 1–25 (MATKPQDANTTSREAITSKADSPPR). Substrate-binding positions include 32–33 (DS) and 64–65 (YG). Cys-96 functions as the Proton donor/acceptor in the catalytic mechanism. Residue 97–98 (NT) participates in substrate binding. The Proton donor/acceptor role is filled by Cys-208. 209–210 (TH) is a binding site for substrate.

The protein belongs to the aspartate/glutamate racemases family.

The catalysed reaction is L-glutamate = D-glutamate. It functions in the pathway cell wall biogenesis; peptidoglycan biosynthesis. Functionally, provides the (R)-glutamate required for cell wall biosynthesis. The chain is Glutamate racemase from Yersinia pseudotuberculosis serotype IB (strain PB1/+).